Consider the following 94-residue polypeptide: Co-chaperonin GroES (94 aa).

It belongs to the GroES chaperonin family. In terms of assembly, heptamer of 7 subunits arranged in a ring. Interacts with the chaperonin GroEL.

It localises to the cytoplasm. Its function is as follows. Together with the chaperonin GroEL, plays an essential role in assisting protein folding. The GroEL-GroES system forms a nano-cage that allows encapsulation of the non-native substrate proteins and provides a physical environment optimized to promote and accelerate protein folding. GroES binds to the apical surface of the GroEL ring, thereby capping the opening of the GroEL channel. This chain is Co-chaperonin GroES, found in Clostridium novyi (strain NT).